Reading from the N-terminus, the 644-residue chain is Exoribonuclease 2 (644 aa).

One can recognise an RNB domain in the interval 189 to 516; sequence REDLTALNFV…NHRLLKAIIT (328 aa). The S1 motif domain occupies 561–643; it reads DTRFPAEIID…ETRNVVARPV (83 aa).

This sequence belongs to the RNR ribonuclease family. RNase II subfamily.

The protein localises to the cytoplasm. The catalysed reaction is Exonucleolytic cleavage in the 3'- to 5'-direction to yield nucleoside 5'-phosphates.. In terms of biological role, involved in mRNA degradation. Hydrolyzes single-stranded polyribonucleotides processively in the 3' to 5' direction. This Yersinia enterocolitica serotype O:8 / biotype 1B (strain NCTC 13174 / 8081) protein is Exoribonuclease 2.